The chain runs to 363 residues: UDP-N-acetylglucosamine--N-acetylmuramyl-(pentapeptide) pyrophosphoryl-undecaprenol N-acetylglucosamine transferase (363 aa).

UDP-N-acetyl-alpha-D-glucosamine-binding positions include 12–14 (TAG), Ser196, and Gln291.

The protein belongs to the glycosyltransferase 28 family. MurG subfamily.

It localises to the cell inner membrane. The catalysed reaction is di-trans,octa-cis-undecaprenyl diphospho-N-acetyl-alpha-D-muramoyl-L-alanyl-D-glutamyl-meso-2,6-diaminopimeloyl-D-alanyl-D-alanine + UDP-N-acetyl-alpha-D-glucosamine = di-trans,octa-cis-undecaprenyl diphospho-[N-acetyl-alpha-D-glucosaminyl-(1-&gt;4)]-N-acetyl-alpha-D-muramoyl-L-alanyl-D-glutamyl-meso-2,6-diaminopimeloyl-D-alanyl-D-alanine + UDP + H(+). The protein operates within cell wall biogenesis; peptidoglycan biosynthesis. Functionally, cell wall formation. Catalyzes the transfer of a GlcNAc subunit on undecaprenyl-pyrophosphoryl-MurNAc-pentapeptide (lipid intermediate I) to form undecaprenyl-pyrophosphoryl-MurNAc-(pentapeptide)GlcNAc (lipid intermediate II). The sequence is that of UDP-N-acetylglucosamine--N-acetylmuramyl-(pentapeptide) pyrophosphoryl-undecaprenol N-acetylglucosamine transferase from Legionella pneumophila (strain Corby).